The following is a 1397-amino-acid chain: Centlein (1397 aa).

Disordered stretches follow at residues 1-43 (MAAR…GLAG) and 56-76 (LWRGEEGSGGRRGSGRAGAAV). At Ala2 the chain carries N-acetylalanine. Phosphoserine occurs at positions 5, 9, and 22. Coiled coils occupy residues 95–126 (EEAKATRSQLLEEELSSLKEELALCQADKEFV) and 405–481 (VVNL…KLMA). 2 disordered regions span residues 422 to 449 (LKEKLEESQGTAPSLSPHDSDSSHSGKA) and 485 to 521 (CDQDFSEKGTEGKHKEPPVKRSRSLSPKSSFMGSEEL). Residues 485 to 503 (CDQDFSEKGTEGKHKEPPV) are compositionally biased toward basic and acidic residues. Coiled coils occupy residues 674–778 (KNEK…KALR), 973–1114 (ISLR…MELL), and 1152–1299 (SESN…LKKM). Ser1219 is modified (phosphoserine). Residue Thr1334 is modified to Phosphothreonine.

In terms of assembly, interacts with CEP250 and CEP68. Interacts with NEK2; the interaction leads to phosphorylation of CNTLN. Phosphorylated directly or indirectly by NEK2.

It is found in the cytoplasm. The protein localises to the cytoskeleton. The protein resides in the microtubule organizing center. Its subcellular location is the centrosome. It localises to the centriole. Its function is as follows. Required for centrosome cohesion and recruitment of CEP68 to centrosomes. The protein is Centlein of Mus musculus (Mouse).